Here is a 241-residue protein sequence, read N- to C-terminus: MKKNLTFFMVIALLFTITPNVYAMHIAEGFLPPMWSGVYFVISAPFIIIGLKQIRERAKDNKDIKMLLGLVAAYAFILSAMKIPSVTGSCSHPTGTGLSAIIFGPFISAIVGLIVLIFQAILLAHGGITTLGANTLSMGIMGPIVSYLIYRGFKNKNQKVAVFLAATLGDLFTYFITSVQLALAFPAQQGGIAASFAKFFSIFSITQIPLAIMEGILTVIIFEFVMKYASKEIEVLGGVRK.

The first 23 residues, 1-23, serve as a signal peptide directing secretion; that stretch reads MKKNLTFFMVIALLFTITPNVYA. Transmembrane regions (helical) follow at residues 29–49, 66–86, 98–118, 121–141, 160–180, and 202–222; these read GFLP…FIII, MLLG…IPSV, LSAI…VLIF, ILLA…MGIM, VAVF…TSVQ, and IFSI…VIIF.

Belongs to the CbiM family. As to quaternary structure, forms an energy-coupling factor (ECF) transporter complex composed of an ATP-binding protein (A component, CbiO), a transmembrane protein (T component, CbiQ) and 2 possible substrate-capture proteins (S components, CbiM and CbiN) of unknown stoichimetry.

Its subcellular location is the cell membrane. Its pathway is cofactor biosynthesis; adenosylcobalamin biosynthesis. Part of the energy-coupling factor (ECF) transporter complex CbiMNOQ involved in cobalt import. In Clostridium tetani (strain Massachusetts / E88), this protein is Cobalt transport protein CbiM.